We begin with the raw amino-acid sequence, 483 residues long: UDP-N-acetylmuramoyl-L-alanyl-D-glutamate--2,6-diaminopimelate ligase (483 aa).

UDP-N-acetyl-alpha-D-muramoyl-L-alanyl-D-glutamate is bound at residue serine 30. 109 to 115 (GTNGKTT) lines the ATP pocket. UDP-N-acetyl-alpha-D-muramoyl-L-alanyl-D-glutamate-binding positions include 151–152 (TT), serine 178, and arginine 186. Lysine 218 carries the N6-carboxylysine modification. Residues arginine 380, 403-406 (DNPR), glycine 453, and glutamate 457 each bind meso-2,6-diaminopimelate. The Meso-diaminopimelate recognition motif signature appears at 403–406 (DNPR).

The protein belongs to the MurCDEF family. MurE subfamily. The cofactor is Mg(2+). In terms of processing, carboxylation is probably crucial for Mg(2+) binding and, consequently, for the gamma-phosphate positioning of ATP.

The protein localises to the cytoplasm. The catalysed reaction is UDP-N-acetyl-alpha-D-muramoyl-L-alanyl-D-glutamate + meso-2,6-diaminopimelate + ATP = UDP-N-acetyl-alpha-D-muramoyl-L-alanyl-gamma-D-glutamyl-meso-2,6-diaminopimelate + ADP + phosphate + H(+). Its pathway is cell wall biogenesis; peptidoglycan biosynthesis. Its function is as follows. Catalyzes the addition of meso-diaminopimelic acid to the nucleotide precursor UDP-N-acetylmuramoyl-L-alanyl-D-glutamate (UMAG) in the biosynthesis of bacterial cell-wall peptidoglycan. This is UDP-N-acetylmuramoyl-L-alanyl-D-glutamate--2,6-diaminopimelate ligase from Chlamydia pneumoniae (Chlamydophila pneumoniae).